Here is a 274-residue protein sequence, read N- to C-terminus: Nitrogenase iron protein (274 aa).

8-15 (GKGGIGKS) is an ATP binding site. C94 is a binding site for [4Fe-4S] cluster. R97 carries the ADP-ribosylarginine; by dinitrogenase reductase ADP-ribosyltransferase modification. C129 is a binding site for [4Fe-4S] cluster.

The protein belongs to the NifH/BchL/ChlL family. In terms of assembly, homodimer. Requires [4Fe-4S] cluster as cofactor. In terms of processing, the reversible ADP-ribosylation of Arg-97 inactivates the nitrogenase reductase and regulates nitrogenase activity.

The enzyme catalyses N2 + 8 reduced [2Fe-2S]-[ferredoxin] + 16 ATP + 16 H2O = H2 + 8 oxidized [2Fe-2S]-[ferredoxin] + 2 NH4(+) + 16 ADP + 16 phosphate + 6 H(+). Its function is as follows. The key enzymatic reactions in nitrogen fixation are catalyzed by the nitrogenase complex, which has 2 components: the iron protein and the molybdenum-iron protein. In Methanocella arvoryzae (strain DSM 22066 / NBRC 105507 / MRE50), this protein is Nitrogenase iron protein.